Consider the following 176-residue polypeptide: 3-hydroxyanthranilate 3,4-dioxygenase (176 aa).

An O2-binding site is contributed by R44. Residues H48, E54, and H92 each coordinate Fe cation. E54 contributes to the substrate binding site. Positions 96 and 106 each coordinate substrate. Fe cation-binding residues include C121, C124, C158, and C161.

Belongs to the 3-HAO family. Homodimer. The cofactor is Fe(2+).

It catalyses the reaction 3-hydroxyanthranilate + O2 = (2Z,4Z)-2-amino-3-carboxymuconate 6-semialdehyde. It participates in cofactor biosynthesis; NAD(+) biosynthesis; quinolinate from L-kynurenine: step 3/3. Its function is as follows. Catalyzes the oxidative ring opening of 3-hydroxyanthranilate to 2-amino-3-carboxymuconate semialdehyde, which spontaneously cyclizes to quinolinate. The chain is 3-hydroxyanthranilate 3,4-dioxygenase from Xanthomonas euvesicatoria pv. vesicatoria (strain 85-10) (Xanthomonas campestris pv. vesicatoria).